Here is a 153-residue protein sequence, read N- to C-terminus: uncharacterized protein (153 aa).

Residues 1–22 (MKMLKKGTAVLFVMIMAVMLVA) form the signal peptide. Residue Cys23 is the site of N-palmitoyl cysteine attachment. Cys23 is lipidated: S-diacylglycerol cysteine. The interval 117 to 153 (DMNKIPGMSSNGDTSKGISMEESAKMLESQGYKEVSK) is disordered. Positions 124–133 (MSSNGDTSKG) are enriched in polar residues.

This sequence to E.coli YehR.

Its subcellular location is the cell membrane. This is an uncharacterized protein from Listeria monocytogenes serovar 1/2a (strain ATCC BAA-679 / EGD-e).